Consider the following 342-residue polypeptide: uncharacterized protein (342 aa).

Arginine 69 contacts substrate. Histidine 176 acts as the Proton donor in catalysis. Residue aspartate 240 participates in substrate binding.

It belongs to the aldose epimerase family.

This is an uncharacterized protein from Saccharomyces cerevisiae (strain ATCC 204508 / S288c) (Baker's yeast).